We begin with the raw amino-acid sequence, 198 residues long: Leucine-rich melanocyte differentiation-associated protein (198 aa).

LRR repeat units lie at residues 2–22 (EKYLSLSGNHSSNKRSLEGLS), 26–47 (SLEELILDNNQLGDDLVLPGLP), 48–69 (RLHTLTLNKNRITDLENLLDHL), and 75–95 (ALEYLSLLGNVACPNELVSLE). In terms of domain architecture, LRRCT spans 96–134 (KDEEDYKRYRCFVLYKLPNLKFLDAQKVTRQEREEALVR).

In terms of tissue distribution, in the embryo, expressed in melanoblasts. In the fetus, expressed in melanocytes. Not detected in retinal pigment epithelial cells.

Functionally, required for melanocyte differentiation. The sequence is that of Leucine-rich melanocyte differentiation-associated protein from Homo sapiens (Human).